The chain runs to 265 residues: Indole-3-glycerol phosphate synthase (265 aa).

The protein belongs to the TrpC family.

It catalyses the reaction 1-(2-carboxyphenylamino)-1-deoxy-D-ribulose 5-phosphate + H(+) = (1S,2R)-1-C-(indol-3-yl)glycerol 3-phosphate + CO2 + H2O. The protein operates within amino-acid biosynthesis; L-tryptophan biosynthesis; L-tryptophan from chorismate: step 4/5. In Xanthomonas axonopodis pv. citri (strain 306), this protein is Indole-3-glycerol phosphate synthase.